The primary structure comprises 283 residues: Large ribosomal subunit protein mL46 (283 aa).

Lys-217 bears the N6-succinyllysine mark. N6-acetyllysine is present on Lys-228. Lys-246 is modified (N6-succinyllysine).

This sequence belongs to the mitochondrion-specific ribosomal protein mL46 family. In terms of assembly, component of the mitochondrial ribosome large subunit (39S) which comprises a 16S rRNA and about 50 distinct proteins.

The protein resides in the mitochondrion. In Mus musculus (Mouse), this protein is Large ribosomal subunit protein mL46 (Mrpl46).